Reading from the N-terminus, the 576-residue chain is Acetylcholine receptor subunit alpha-like 2 (576 aa).

The N-terminal stretch at 1 to 21 (MAPGCCTTRPRPIALLAHIWR) is a signal peptide. Residues 22–261 (HCKPLCLLLV…FFNITLRRKT (240 aa)) are Extracellular-facing. The N-linked (GlcNAc...) asparagine glycan is linked to Asn-65. 2 disulfides stabilise this stretch: Cys-169-Cys-183 and Cys-243-Cys-244. The N-linked (GlcNAc...) asparagine glycan is linked to Asn-254. The next 3 membrane-spanning stretches (helical) occupy residues 262–285 (LFYT…VFYL), 293–311 (IALC…LLIS), and 327–346 (YLLF…IIIL). Residues 347-526 (NIHYRKPSTH…WGFVAMVMDR (180 aa)) are Cytoplasmic-facing. A helical membrane pass occupies residues 527–545 (LFLWLFMIASLVGTFVILG). Asn-570 carries an N-linked (GlcNAc...) asparagine glycan.

Belongs to the ligand-gated ion channel (TC 1.A.9) family. Acetylcholine receptor (TC 1.A.9.1) subfamily. As to expression, CNS in embryos.

The protein localises to the postsynaptic cell membrane. It localises to the cell membrane. In terms of biological role, after binding acetylcholine, the AChR responds by an extensive change in conformation that affects all subunits and leads to opening of an ion-conducting channel across the plasma membrane. This Drosophila melanogaster (Fruit fly) protein is Acetylcholine receptor subunit alpha-like 2 (nAChRalpha2).